Consider the following 277-residue polypeptide: uncharacterized protein (277 aa).

Residues His-256–Ser-277 are disordered.

Functionally, this protein may be involved in virus assembly. Essential for virus function. This is an uncharacterized protein from Saccharolobus solfataricus (Sulfolobus solfataricus).